Reading from the N-terminus, the 229-residue chain is Endonuclease V (229 aa).

Belongs to the endonuclease V family.

It is found in the cytoplasm. It catalyses the reaction Endonucleolytic cleavage at apurinic or apyrimidinic sites to products with a 5'-phosphate.. Its function is as follows. DNA repair enzyme involved in the repair of deaminated bases. Selectively cleaves double-stranded DNA at the second phosphodiester bond 3' to a deoxyinosine leaving behind the intact lesion on the nicked DNA. The chain is Endonuclease V from Methanopyrus kandleri (strain AV19 / DSM 6324 / JCM 9639 / NBRC 100938).